A 66-amino-acid chain; its full sequence is UPF0337 protein BP1738 (66 aa).

The protein belongs to the UPF0337 (CsbD) family.

The protein is UPF0337 protein BP1738 of Bordetella pertussis (strain Tohama I / ATCC BAA-589 / NCTC 13251).